Here is a 159-residue protein sequence, read N- to C-terminus: Bacterial non-heme ferritin (159 aa).

The Ferritin-like diiron domain maps to 1–145 (MISEKLQNAI…GIVDKIKRAG (145 aa)). Fe cation-binding residues include Glu17, Glu50, His53, Glu94, and Gln127.

It belongs to the ferritin family. Prokaryotic subfamily. As to quaternary structure, homooligomer of 24 subunits that assemble into a spherical protein shell (12 +/- 1 nM diameter) that can sequester at least 2000 iron atoms.

It catalyses the reaction 4 Fe(2+) + O2 + 6 H2O = 4 iron(III) oxide-hydroxide + 12 H(+). May alleviate iron toxicity in the presence of oxygen. In Bacteroides fragilis (strain 638R), this protein is Bacterial non-heme ferritin (ftnA).